Reading from the N-terminus, the 722-residue chain is Solute carrier organic anion transporter family member 4C1 (722 aa).

The segment at 1 to 81 (MQGSKGIENP…PGSQLSELEE (81 aa)) is disordered. The Cytoplasmic segment spans residues 1–101 (MQGSKGIENP…QCLQRCNTPQ (101 aa)). Residues Ser15 and Ser16 each carry the phosphoserine modification. Thr19 is modified (phosphothreonine). Ser24, Ser26, and Ser28 each carry phosphoserine. Residues 25–46 (ASPSQVEVSAVASRNQNGGSQP) show a composition bias toward polar residues. A helical transmembrane segment spans residues 102–122 (GFLLHYCLLALTQGIVVNGLV). Over 123 to 141 (NISISTIEKRYEMKSSLTG) the chain is Extracellular. The helical transmembrane segment at 142-162 (LISSSYDISFCVLSLFVSFFG) threads the bilayer. Residues 163 to 168 (ERGHKP) lie on the Cytoplasmic side of the membrane. Residues 169–193 (RWLAFASFMIGLGALVFSLPHFFSG) form a helical membrane-spanning segment. Over 194–218 (RYELGSIFEDTCLTRNSTRCSSSTS) the chain is Extracellular. A helical transmembrane segment spans residues 219–249 (LLSNYFYVFVLGQLLLGTGGTPLYTLGTAFI). Residues 250–269 (DDSVPTHKSSLYIGIGYSMS) are Cytoplasmic-facing. A helical membrane pass occupies residues 270–290 (ILGPAIGYVLGGQLLTMYIDI). Topologically, residues 291–306 (AMGQSSDLTEDDPRWL) are extracellular. The chain crosses the membrane as a helical span at residues 307–331 (GAWWIGFLLAWLFAWSLIMPFSCFP). Residues 332-376 (KHLPGTAKIQAGKTSQTHQNNSTSFQHTDENFGKSIKDFPTAVKN) are Cytoplasmic-facing. The chain crosses the membrane as a helical span at residues 377-398 (LMRNTVFICLVLSTTSEALITT). The Extracellular segment spans residues 399–418 (GFATFLPKFIENQFGLTSSF). Residues 419-442 (AATLGGAVLIPGAALGQILGGVLV) traverse the membrane as a helical segment. At 443–446 (SKFK) the chain is on the cytoplasmic side. A helical membrane pass occupies residues 447-470 (MKCKNTMKFALCTSGVALVLSFVF). The Extracellular segment spans residues 471-578 (IYAKCENEPF…RTRCSNLPIF (108 aa)). The Kazal-like domain occupies 494 to 549 (GNLTAPCNANCNCLRSYYYPLCGSDGIQYFSPCFAGCLNSVSNRKPKVYYNCSCIE). 3 cysteine pairs are disulfide-bonded: Cys500-Cys530, Cys506-Cys526, and Cys515-Cys547. Residues 579 to 601 (LGIFFITVIFTFMAGTPITVSIL) traverse the membrane as a helical segment. At 602-610 (RCVNHRHRS) the chain is on the cytoplasmic side. Residues 611–636 (LALGVQFMLLRLLGTIPGPIIFGVII) traverse the membrane as a helical segment. At 637–670 (DSTCVLWDVNECGIKGACWIYDNIKMAHMLVAIS) the chain is on the extracellular side. Residues 671 to 688 (VTCKVITIFFNGLAIVLY) form a helical membrane-spanning segment. Over 689-722 (KPPPPGTEVSFQSQNVIVSTISVEEDLDKAENEG) the chain is Cytoplasmic.

This sequence belongs to the organo anion transporter (TC 2.A.60) family. As to expression, strongly expressed in initial segment of epididymis and seminal vesicles.

The protein localises to the basolateral cell membrane. The catalysed reaction is estrone 3-sulfate(out) = estrone 3-sulfate(in). It carries out the reaction L-thyroxine(out) = L-thyroxine(in). It catalyses the reaction 3,3',5-triiodo-L-thyronine(out) = 3,3',5-triiodo-L-thyronine(in). The enzyme catalyses chenodeoxycholate(out) = chenodeoxycholate(in). The catalysed reaction is glycocholate(out) = glycocholate(in). It carries out the reaction L-homoarginine(in) = L-homoarginine(out). It catalyses the reaction L-arginine(in) = L-arginine(out). The enzyme catalyses N(omega),N(omega)-dimethyl-L-arginine(out) = N(omega),N(omega)-dimethyl-L-arginine(in). Mediates the transport of organic anions such as steroids (estrone 3-sulfate, chenodeoxycholate, glycocholate) and thyroid hormones (3,3',5-triiodo-L-thyronine (T3), L-thyroxine (T4)), in the kidney. Capable of transporting cAMP and pharmacological substances such as digoxin, ouabain and methotrexate. Transport is independent of sodium, chloride ion, and ATP. Transport activity is stimulated by an acidic extracellular environment due to increased substrate affinity to the transporter. The driving force for this transport activity is currently not known. The role of hydrogencarbonate (HCO3(-), bicarbonate) as the probable counteranion that exchanges for organic anions is still not well defined. Functions as an uptake transporter at the apical membrane, suggesting a role in renal reabsorption. Involved in the renal secretion of the uremic toxin ADMA (N(omega),N(omega)-dimethyl-L-arginine or asymmetrical dimethylarginine), which is associated to cardiovascular events and mortality, and the structurally related amino acids L-arginine and L-homoarginine (a cardioprotective biomarker). Can act bidirectionally, suggesting a dual protective role of this transport protein; exporting L-homoarginine after being synthesized in proximal tubule cells, and mediating uptake of ADMA from the blood into proximal tubule cells where it is degraded by the enzyme dimethylarginine dimethylaminohydrolase 1 (DDAH1). May be involved in sperm maturation by enabling directed movement of organic anions and compounds within or between cells. This ion-transporting process is important to maintain the strict epididymal homeostasis necessary for sperm maturation. May have a role in secretory functions since seminal vesicle epithelial cells are assumed to secrete proteins involved in decapacitation by modifying surface proteins to facilitate the acquisition of the ability to fertilize the egg. The chain is Solute carrier organic anion transporter family member 4C1 from Mus musculus (Mouse).